The chain runs to 334 residues: Beta-glucanase (334 aa).

Residues 1-27 (MKNRVISLLMASLLLVLSVIVAPFYKA) form the signal peptide. The 221-residue stretch at 28–248 (EAATVVNTPF…YVKYYPNGVP (221 aa)) folds into the GH16 domain. The Nucleophile role is filled by Glu136. Glu140 serves as the catalytic Proton donor. The Dockerin domain maps to 267 to 334 (NLPLKGDVNG…RYLIRAIPSL (68 aa)).

This sequence belongs to the glycosyl hydrolase 16 family. In terms of assembly, may form part of a multienzyme complex (cellulosome).

The catalysed reaction is Hydrolysis of (1-&gt;4)-beta-D-glucosidic linkages in beta-D-glucans containing (1-&gt;3)- and (1-&gt;4)-bonds.. In Acetivibrio thermocellus (strain ATCC 27405 / DSM 1237 / JCM 9322 / NBRC 103400 / NCIMB 10682 / NRRL B-4536 / VPI 7372) (Clostridium thermocellum), this protein is Beta-glucanase (licB).